The chain runs to 179 residues: UPF0227 protein Swoo_1808 (179 aa).

Belongs to the UPF0227 family.

The chain is UPF0227 protein Swoo_1808 from Shewanella woodyi (strain ATCC 51908 / MS32).